Reading from the N-terminus, the 323-residue chain is Chitinase 1 (323 aa).

A signal peptide spans 1 to 20 (MRALAVVVVATAFAVVAVRG). One can recognise a Chitin-binding type-1 domain in the interval 21–61 (EQCGSQAGGALCPNCLCCSQYGWCGSTSAYCGSGCQSQCSG). 8 disulfide bridges follow: Cys23/Cys38, Cys32/Cys44, Cys35/Cys63, Cys37/Cys51, Cys55/Cys59, Cys100/Cys162, Cys176/Cys184, and Cys283/Cys315. The active-site Proton donor is Glu144.

It belongs to the glycosyl hydrolase 19 family. Chitinase class I subfamily. In terms of tissue distribution, expressed in roots, leaves, sheaths and meristems.

The catalysed reaction is Random endo-hydrolysis of N-acetyl-beta-D-glucosaminide (1-&gt;4)-beta-linkages in chitin and chitodextrins.. Hydrolyzes chitin and may play a role in defense against fungal pathogens containing chitin. This is Chitinase 1 (Cht1) from Oryza sativa subsp. japonica (Rice).